The chain runs to 508 residues: Phenylalanine--tRNA ligase alpha subunit (508 aa).

N-acetylalanine is present on A2. Residue T190 is modified to Phosphothreonine. Phosphoserine occurs at positions 193 and 301. K311 bears the N6-acetyllysine mark. Residues T329, Q372–E374, and Y412 each bind L-phenylalanine. E414 contributes to the Mg(2+) binding site. F438 is a binding site for L-phenylalanine.

It belongs to the class-II aminoacyl-tRNA synthetase family. Phe-tRNA synthetase alpha subunit type 2 subfamily. As to quaternary structure, heterotetramer; dimer of two heterodimers formed by FARSA and FARSB.

The protein resides in the cytoplasm. The enzyme catalyses tRNA(Phe) + L-phenylalanine + ATP = L-phenylalanyl-tRNA(Phe) + AMP + diphosphate + H(+). The sequence is that of Phenylalanine--tRNA ligase alpha subunit (FARSA) from Homo sapiens (Human).